Here is a 937-residue protein sequence, read N- to C-terminus: Lysosomal alpha-glucosidase (937 aa).

The first 23 residues, 1-23 (MMRWPPCSRPLLGVCTLLSLALL), serve as a signal peptide directing secretion. A propeptide spanning residues 24 to 60 (GHILLHDLEVVPRELRGFSQDEIHQACQPGASSPECR) is cleaved from the precursor. One can recognise a P-type domain in the interval 68–118 (TQCDLPPNSRFDCAPDKGITPQQCEARGCCYMPAEWPPDAQMGQPWCFFPP). 3 disulfide bridges follow: Cys70-Cys97, Cys80-Cys96, and Cys91-Cys114. Residues Asn127, Asn220, Asn259, and Asn377 are each glycosylated (N-linked (GlcNAc...) asparagine). Asp391 contacts substrate. The N-linked (GlcNAc...) asparagine glycan is linked to Asn457. Catalysis depends on Asp505, which acts as the Nucleophile. Glu508 is an active-site residue. A disulfide bond links Cys520 and Cys545. Substrate-binding residues include Arg587 and Asp603. Cysteines 634 and 645 form a disulfide. N-linked (GlcNAc...) asparagine glycosylation is present at Asn639. Residue His661 participates in substrate binding. N-linked (GlcNAc...) asparagine glycosylation is found at Asn867, Asn888, and Asn910.

This sequence belongs to the glycosyl hydrolase 31 family.

The protein resides in the lysosome. It localises to the lysosome membrane. The catalysed reaction is Hydrolysis of terminal, non-reducing (1-&gt;4)-linked alpha-D-glucose residues with release of alpha-D-glucose.. Essential for the degradation of glycogen in lysosomes. Has highest activity on alpha-1,4-linked glycosidic linkages, but can also hydrolyze alpha-1,6-linked glucans. The chain is Lysosomal alpha-glucosidase (GAA) from Bos taurus (Bovine).